The primary structure comprises 706 residues: Glutamine-dependent NAD(+) synthetase (706 aa).

The 271-residue stretch at 5 to 275 (VTVATCALNQ…VEVLTATLDL (271 aa)) folds into the CN hydrolase domain. Residue E45 is the Proton acceptor; for glutaminase activity of the active site. K114 functions as the For glutaminase activity in the catalytic mechanism. Residue C175 is the Nucleophile; for glutaminase activity of the active site. The segment at 325–706 (YHSPEEEISL…AAPQSLDGVD (382 aa)) is ligase. 355–362 (PLSGGVDS) provides a ligand contact to ATP. S357 is a catalytic residue.

This sequence in the C-terminal section; belongs to the NAD synthetase family. In terms of assembly, homohexamer.

The enzyme catalyses deamido-NAD(+) + L-glutamine + ATP + H2O = L-glutamate + AMP + diphosphate + NAD(+) + H(+). The protein operates within cofactor biosynthesis; NAD(+) biosynthesis; NAD(+) from deamido-NAD(+) (L-Gln route): step 1/1. Catalyzes the final step of the nicotinamide adenine dinucleotide (NAD) de novo synthesis pathway, the ATP-dependent amidation of deamido-NAD using L-glutamine as a nitrogen source. This chain is Glutamine-dependent NAD(+) synthetase (NADSYN1), found in Macaca fascicularis (Crab-eating macaque).